The primary structure comprises 383 residues: Lipoyl synthase, mitochondrial (383 aa).

A mitochondrion-targeting transit peptide spans 1-19 (MHASTLTRCMRVAQNARCL). Positions 69–97 (DAAPGTKPSRKPNASNRKPKWLKAQPTQG) are disordered. [4Fe-4S] cluster is bound by residues C116, C121, C127, C147, C151, C154, and S362. The Radical SAM core domain maps to 132–351 (KDGIATATIM…QKVAEQMGFL (220 aa)).

The protein belongs to the radical SAM superfamily. Lipoyl synthase family. It depends on [4Fe-4S] cluster as a cofactor.

The protein resides in the mitochondrion. The catalysed reaction is [[Fe-S] cluster scaffold protein carrying a second [4Fe-4S](2+) cluster] + N(6)-octanoyl-L-lysyl-[protein] + 2 oxidized [2Fe-2S]-[ferredoxin] + 2 S-adenosyl-L-methionine + 4 H(+) = [[Fe-S] cluster scaffold protein] + N(6)-[(R)-dihydrolipoyl]-L-lysyl-[protein] + 4 Fe(3+) + 2 hydrogen sulfide + 2 5'-deoxyadenosine + 2 L-methionine + 2 reduced [2Fe-2S]-[ferredoxin]. The protein operates within protein modification; protein lipoylation via endogenous pathway; protein N(6)-(lipoyl)lysine from octanoyl-[acyl-carrier-protein]: step 2/2. Its function is as follows. Catalyzes the radical-mediated insertion of two sulfur atoms into the C-6 and C-8 positions of the octanoyl moiety bound to the lipoyl domains of lipoate-dependent enzymes, thereby converting the octanoylated domains into lipoylated derivatives. The chain is Lipoyl synthase, mitochondrial from Phytophthora infestans (strain T30-4) (Potato late blight agent).